Here is a 152-residue protein sequence, read N- to C-terminus: Nucleoplasmin-like protein (152 aa).

Positions 109–128 (EVVDMEEDDEEDDVAEDEED) are enriched in acidic residues. Residues 109–152 (EVVDMEEDDEEDDVAEDEEDEHPKKRAKIENAADGKNAKNNKKK) are disordered. The segment covering 136–145 (KIENAADGKN) has biased composition (basic and acidic residues).

It belongs to the nucleoplasmin family. In terms of assembly, decamer formed by two pentameric rings associated in a head-to-head fashion.

The protein resides in the nucleus. Binds to core histones and functions in the ATP-facilitated assembly of approximately regularly spaced nucleosomal arrays. May participate in parallel with other histone-binding proteins such as NAP-1. In terms of biological role, inactive for chromatin assembly. In vitro it appears to form a high molecular mass aggregate with the core histones. The protein is Nucleoplasmin-like protein (Nlp) of Drosophila melanogaster (Fruit fly).